An 818-amino-acid polypeptide reads, in one-letter code: LisH domain-containing protein ARMC9 (818 aa).

In terms of domain architecture, LisH spans 7 to 39; it reads HESELLGLVKEYLDFAEFEDTLKTFSKECKIKG. Residues 204 to 230 are a coiled coil; the sequence is QSNKEILQQLHQQLVEAERRSVTYLKR. The residue at position 582 (Ser-582) is a Phosphoserine. Disordered stretches follow at residues 642–755 and 790–818; these read VQWS…TTRE and SSCGPQQASRPGSTASSTRGLPSSQSHRK. The segment covering 701-711 has biased composition (low complexity); the sequence is STPESCVSSSS. Over residues 792–818 the composition is skewed to polar residues; the sequence is CGPQQASRPGSTASSTRGLPSSQSHRK.

Interacts with TOGARAM1, CCDC66, CEP104, CSPP1 and CEP290. Interacts with NDUFAF2. Strongly expressed in most melanomas and melanocytes. Weakly expressed in the testis.

It is found in the cytoplasm. The protein resides in the cytoskeleton. The protein localises to the cilium basal body. Its subcellular location is the cell projection. It localises to the cilium. It is found in the microtubule organizing center. The protein resides in the centrosome. The protein localises to the centriole. Involved in ciliogenesis. It is required for appropriate acetylation and polyglutamylation of ciliary microtubules, and regulation of cilium length. Acts as a positive regulator of hedgehog (Hh)signaling. May participate in the trafficking and/or retention of GLI2 and GLI3 proteins at the ciliary tip. This Homo sapiens (Human) protein is LisH domain-containing protein ARMC9.